Consider the following 488-residue polypeptide: Probable malate:quinone oxidoreductase (488 aa).

This sequence belongs to the MQO family. FAD is required as a cofactor.

It carries out the reaction (S)-malate + a quinone = a quinol + oxaloacetate. The protein operates within carbohydrate metabolism; tricarboxylic acid cycle; oxaloacetate from (S)-malate (quinone route): step 1/1. This is Probable malate:quinone oxidoreductase from Neisseria meningitidis serogroup C (strain 053442).